A 289-amino-acid polypeptide reads, in one-letter code: Rhodopsin (289 aa).

At 1 to 7 (YLVSPAA) the chain is on the extracellular side. The chain crosses the membrane as a helical span at residues 8-32 (YAALGAYMFLLILIGFPVNFLTLYV). Residues 33 to 44 (TLEHKKLRTPLN) lie on the Cytoplasmic side of the membrane. The helical transmembrane segment at 45–67 (YILLNLAVADLFMVLGGFTTTMY) threads the bilayer. Topologically, residues 68-81 (TSMHGYFVLGRLGC) are extracellular. The cysteines at positions 81 and 158 are disulfide-linked. Residues 82–104 (NLEGFFATLGGEIALWSLVVLAI) traverse the membrane as a helical segment. Positions 105–107 (ERW) match the 'Ionic lock' involved in activated form stabilization motif. The Cytoplasmic segment spans residues 105–123 (ERWIVVCKPISNFRFTEDN). Residues 124-144 (AIMGLAFSWVMALTCAVPPLV) form a helical membrane-spanning segment. Topologically, residues 145–173 (GWSRYIPEGMQCSCGVDYYTRAEGFNNES) are extracellular. N171 carries N-linked (GlcNAc...) asparagine glycosylation. A helical membrane pass occupies residues 174–195 (FVIYMFIVHFPIPLSVIFFCYG). At 196-223 (RLLCAVKEAAAAQQESETTQRAEKEVSR) the chain is on the cytoplasmic side. The chain crosses the membrane as a helical span at residues 224–245 (MVVILVIGFLVCWLPYASVAWW). At 246-257 (IFCNQGSDFGPI) the chain is on the extracellular side. Residues 258–279 (FMTLPSFFAKRPAIYNPMIYIC) traverse the membrane as a helical segment. N6-(retinylidene)lysine is present on K267. Residues 280 to 289 (MNKQFRHCMI) are Cytoplasmic-facing.

This sequence belongs to the G-protein coupled receptor 1 family. Opsin subfamily. In terms of processing, phosphorylated on some or all of the serine and threonine residues present in the C-terminal region. Contains one covalently linked retinal chromophore.

The protein resides in the membrane. The protein localises to the cell projection. Its subcellular location is the cilium. It is found in the photoreceptor outer segment. In terms of biological role, photoreceptor required for image-forming vision at low light intensity. While most salt water fish species use retinal as chromophore, most freshwater fish use 3-dehydroretinal, or a mixture of retinal and 3-dehydroretinal. Light-induced isomerization of 11-cis to all-trans retinal triggers a conformational change that activates signaling via G-proteins. Subsequent receptor phosphorylation mediates displacement of the bound G-protein alpha subunit by arrestin and terminates signaling. This chain is Rhodopsin (rho), found in Batrachocottus multiradiatus (Baikal sculpin).